The chain runs to 226 residues: Enolase-phosphatase E1 (226 aa).

The protein belongs to the HAD-like hydrolase superfamily. MasA/MtnC family. In terms of assembly, monomer. Requires Mg(2+) as cofactor.

The enzyme catalyses 5-methylsulfanyl-2,3-dioxopentyl phosphate + H2O = 1,2-dihydroxy-5-(methylsulfanyl)pent-1-en-3-one + phosphate. Its pathway is amino-acid biosynthesis; L-methionine biosynthesis via salvage pathway; L-methionine from S-methyl-5-thio-alpha-D-ribose 1-phosphate: step 3/6. The protein operates within amino-acid biosynthesis; L-methionine biosynthesis via salvage pathway; L-methionine from S-methyl-5-thio-alpha-D-ribose 1-phosphate: step 4/6. Its function is as follows. Bifunctional enzyme that catalyzes the enolization of 2,3-diketo-5-methylthiopentyl-1-phosphate (DK-MTP-1-P) into the intermediate 2-hydroxy-3-keto-5-methylthiopentenyl-1-phosphate (HK-MTPenyl-1-P), which is then dephosphorylated to form the acireductone 1,2-dihydroxy-3-keto-5-methylthiopentene (DHK-MTPene). In Shewanella sp. (strain W3-18-1), this protein is Enolase-phosphatase E1.